Here is a 1037-residue protein sequence, read N- to C-terminus: MGVALTRLAQWTAAGYETGTLEITPLNESILNEITKFVESFSYKYPQEAKFVFVEPLEWKTYLEPSAFELGYVVSATTAESEETGKDGQPLLFLSVPYIKVRSFGQLSQLLSIATDSKLQEAQACIEANRDPVVKILGPDYNEMKEDPTRLTLLDTIIKDKETYMKRKVAILLKQLDLHLLNHSLKYISLEISLNPGTFKKDIELLKRFSGKGEQTVLESIEYTSDYEFSNGCRAPPWRQIQGEICYVLVKPHDMETLCLTCSTEGVFLNGGKTEEEGEINYERKGEIYKDLVTCLKDKSPVFSENMSKHEIRFTEEQQKDNQIFEKPKTEDGHSSVAGSEKSKIEKISFGKSPMTKRLEPSLNWRVTVDYKDHKSSIKDSQEEKQGKLEKSSSVSVAPSRAQSHRKGGEKVEETVSESSSESEEDEEPPDHRQEANADLPSEYWQIQKLVKYLKGGNQTATVIALCSMRDFNLAQETCQLAIRDVGGLEVLINLLDTDEVKCKIGSLKILKEISHNPQIRRNIVDLGGLPIMVNILDSPHKSLKCLSAETIANVAKFKRARRAVRQHGGITKLVALLDCGQNSTEPTQPSLYETRDVEVARCGALALWSCSKSHSNKEAIRKAGGIPLLARLLKTSHENMLIPVVGTLQECASEENYRAAIKAERIIENLVKNLNSENEQLQEHCAMAIYQCAEDEETRDLVRLHGGLKPLASLLNNTDNKERLAAVTGAIWKCSISKENVIKFREYKAIETLVGLLTDQPEEVLVNVVGALGECCQEYENRVLVRKCGGIQPLVNLLVGINQALLVNVTKAVGACAVEPESMAIIDRLDGVRLLWSLLKNPHPDVKASAAWALCPCIENAKDAGEMVRSFVGGLELVVNLLKSDNKEVLASVCAAITNIAKDQENLAVITDHGVVPLLSKLANTNNDKLRRHLAEAISRCCMWGRNRVAFGEHKAVAPLVRYLKSNDTNVHRATAQALYQLSEDADNCITMHENGAVKLLLDMVGSPDQDLQEAAAGCISNIRRLALATEKARYN.

2 stretches are compositionally biased toward basic and acidic residues: residues 316 to 334 and 376 to 391; these read EEQQKDNQIFEKPKTEDGH and SSIKDSQEEKQGKLEK. Disordered stretches follow at residues 316-353 and 376-439; these read EEQQKDNQIFEKPKTEDGHSSVAGSEKSKIEKISFGKS and SSIK…ANAD. ARM repeat units lie at residues 477–516, 518–557, 528–570, 615–654, 656–695, 739–778, 821–860, 864–903, 905–944, and 946–985; these read ETCQLAIRDVGGLEVLINLLDTDEVKCKIGSLKILKEISH, PQIRRNIVDLGGLPIMVNILDSPHKSLKCLSAETIANVAK, GGLP…QHGG, HSNKEAIRKAGGIPLLARLLKTSHENMLIPVVGTLQECAS, ENYRAAIKAERIIENLVKNLNSENEQLQEHCAMAIYQCAE, KENVIKFREYKAIETLVGLLTDQPEEVLVNVVGALGECCQ, PESMAIIDRLDGVRLLWSLLKNPHPDVKASAAWALCPCIE, DAGEMVRSFVGGLELVVNLLKSDNKEVLASVCAAITNIAK, QENLAVITDHGVVPLLSKLANTNNDKLRRHLAEAISRCCM, and GRNRVAFGEHKAVAPLVRYLKSNDTNVHRATAQALYQLSE. The residue at position 545 (Lys-545) is an N6-methyllysine.

As to quaternary structure, component of the outer dynein arm-docking complex along with ODAD1, ODAD3, and ODAD4. Interacts with CFAP61. In terms of tissue distribution, highly expressed in testis. In males, also detected at lower levels in lung, brain, liver and muscle. In females, detected in ovary.

The protein resides in the cytoplasm. Its subcellular location is the cytoskeleton. The protein localises to the cilium axoneme. It localises to the cilium basal body. Component of the outer dynein arm-docking complex (ODA-DC) that mediates outer dynein arms (ODA) binding onto the doublet microtubule. Involved in mediating assembly of both ODAs and their axonemal docking complex onto ciliary microtubules. This chain is Outer dynein arm-docking complex subunit 2, found in Mus musculus (Mouse).